The chain runs to 312 residues: Glyoxylate/hydroxypyruvate reductase A (312 aa).

R227 is an active-site residue. The Proton donor role is filled by H275.

The protein belongs to the D-isomer specific 2-hydroxyacid dehydrogenase family. GhrA subfamily.

The protein resides in the cytoplasm. It carries out the reaction glycolate + NADP(+) = glyoxylate + NADPH + H(+). The catalysed reaction is (R)-glycerate + NAD(+) = 3-hydroxypyruvate + NADH + H(+). The enzyme catalyses (R)-glycerate + NADP(+) = 3-hydroxypyruvate + NADPH + H(+). In terms of biological role, catalyzes the NADPH-dependent reduction of glyoxylate and hydroxypyruvate into glycolate and glycerate, respectively. The protein is Glyoxylate/hydroxypyruvate reductase A of Escherichia coli (strain 55989 / EAEC).